Consider the following 269-residue polypeptide: Interleukin-1 beta (269 aa).

The propeptide occupies 1-117; that stretch reads MATVPELNCE…DDDDNLLVCD (117 aa).

Belongs to the IL-1 family. Monomer. Interacts with MEFV. Interacts with integrins ITGAV:ITGBV and ITGA5:ITGB1; integrin-binding is required for IL1B signaling. Interacts with cargo receptor TMED10; the interaction is direct and is required for the secretion of IL1B mature form. Interacts with HSP90AB1; the interaction facilitates cargo translocation into the ERGIC. Interacts with HSP90B1; the interaction facilitates cargo translocation into the ERGIC. In terms of tissue distribution, expressed in activated macrophages (at protein level).

The protein localises to the cytoplasm. It is found in the cytosol. The protein resides in the secreted. Its subcellular location is the lysosome. It localises to the extracellular exosome. Functionally, potent pro-inflammatory cytokine. Initially discovered as the major endogenous pyrogen, induces prostaglandin synthesis, neutrophil influx and activation, T-cell activation and cytokine production, B-cell activation and antibody production, and fibroblast proliferation and collagen production. Promotes Th17 differentiation of T-cells. Synergizes with IL12/interleukin-12 to induce IFNG synthesis from T-helper 1 (Th1) cells. Plays a role in angiogenesis by inducing VEGF production synergistically with TNF and IL6. Involved in transduction of inflammation downstream of pyroptosis: its mature form is specifically released in the extracellular milieu by passing through the gasdermin-D (GSDMD) pore. The protein is Interleukin-1 beta (Il1b) of Mus musculus (Mouse).